Reading from the N-terminus, the 71-residue chain is Protein Tlp homolog (71 aa).

A disordered region spans residues 30–56 (ETLQNNSLSRDQRQAIMEKNKRREESI). A compositionally biased stretch (basic and acidic residues) spans 39–56 (RDQRQAIMEKNKRREESI).

The protein belongs to the Tlp family.

This is Protein Tlp homolog from Desulforamulus reducens (strain ATCC BAA-1160 / DSM 100696 / MI-1) (Desulfotomaculum reducens).